The sequence spans 475 residues: Splicing factor U2AF 65 kDa subunit (475 aa).

The segment at 1–90 (MSDFDEFERQ…RHEKKKKVRK (90 aa)) is disordered. N-acetylserine is present on Ser-2. Ser-2 carries the phosphoserine modification. The required for interaction with PRPF19 stretch occupies residues 2–93 (SDFDEFERQL…KKKKVRKYWD (92 aa)). Positions 7–22 (FERQLNENKQERDKEN) are enriched in basic and acidic residues. Lys-15 carries the 5-hydroxylysine; by JMJD6; alternate modification. Lys-15 is covalently cross-linked (Glycyl lysine isopeptide (Lys-Gly) (interchain with G-Cter in SUMO2); alternate). The tract at residues 17–47 (ERDKENRHRKRSHSRSRSRDRKRRSRSRDRR) is necessary and sufficient to stimulate pre-mRNAs 3'-end cleavage in a CFIm complex-dependent manner. A compositionally biased stretch (basic residues) spans 23–46 (RHRKRSHSRSRSRDRKRRSRSRDR). Residues 47–56 (RNRDQRSASR) are compositionally biased toward basic and acidic residues. Residue Lys-70 forms a Glycyl lysine isopeptide (Lys-Gly) (interchain with G-Cter in SUMO2); alternate linkage. The residue at position 70 (Lys-70) is an N6-acetyllysine; alternate. Ser-79 is modified (phosphoserine). Basic residues predominate over residues 79–89 (SPRHEKKKKVR). RRM domains follow at residues 149–231 (RRLY…RPHD), 259–337 (HKLF…RASV), and 385–466 (LPEE…YCDP). Lys-276 carries the 5-hydroxylysine; by JMJD6 modification. Ser-294 is modified (phosphoserine).

The protein belongs to the splicing factor SR family. Interacts with U2AF1L4. Heterodimer with U2AF1. Binds unphosphorylated SF1. Interacts with SCAF11 and SNW1. Interacts with ZRSR2/U2AF1-RS2. Interacts with RBM17. Interacts with PRPF19; the interaction is direct. Interacts with POLR2A (via the C-terminal domain); recruits PRPF19 and the Prp19 complex to the pre-mRNA. Interacts with KHDC4 (Isoform 2). Interacts with ZRSR2. Interacts with the SF3B complex composed of SF3B1, SF3B2, SF3B3, SF3B4, SF3B5, SF3B6 and PHF5A. Interacts (via N-terminus) with CPSF7 (via C-terminus); this interaction stimulates pre-mRNA 3'-end processing by promoting the recruitment of the CFIm complex to cleavage and polyadenylation signals. Interacts with ARGLU1; interaction may be involved in ARGLU1-mediated modulation of alternative splicing. Lysyl-hydroxylation at Lys-15 and Lys-276 affects the mRNA splicing activity of the protein, leading to regulate some, but not all, alternative splicing events.

It is found in the nucleus. Functionally, plays a role in pre-mRNA splicing and 3'-end processing. By recruiting PRPF19 and the PRP19C/Prp19 complex/NTC/Nineteen complex to the RNA polymerase II C-terminal domain (CTD), and thereby pre-mRNA, may couple transcription to splicing. Induces cardiac troponin-T (TNNT2) pre-mRNA exon inclusion in muscle. Regulates the TNNT2 exon 5 inclusion through competition with MBNL1. Binds preferentially to a single-stranded structure within the polypyrimidine tract of TNNT2 intron 4 during spliceosome assembly. Required for the export of mRNA out of the nucleus, even if the mRNA is encoded by an intron-less gene. Represses the splicing of MAPT/Tau exon 10. Positively regulates pre-mRNA 3'-end processing by recruiting the CFIm complex to cleavage and polyadenylation signals. This Homo sapiens (Human) protein is Splicing factor U2AF 65 kDa subunit (U2AF2).